A 309-amino-acid chain; its full sequence is CDK-activating kinase assembly factor MAT1 (309 aa).

At M1 the chain carries N-acetylmethionine. The segment at 6-50 adopts an RING-type zinc-finger fold; it reads CPRCKTTKYRNPSLKLMVNVCGHTLCESCVDLLFVRGAGNCPECG. Position 51 is a phosphothreonine (T51). Residues 142 to 161 enclose the UIM domain; it reads REQEELEEALEVERQEHEQR. S279 is modified (phosphoserine).

Associates primarily with CDK7 and cyclin H to form the CAK complex. CAK can further associate with the core-TFIIH to form the TFIIH basal transcription factor.

The protein localises to the nucleus. Functionally, stabilizes the cyclin H-CDK7 complex to form a functional CDK-activating kinase (CAK) enzymatic complex. CAK activates the cyclin-associated kinases CDK1, CDK2, CDK4 and CDK6 by threonine phosphorylation. CAK complexed to the core-TFIIH basal transcription factor activates RNA polymerase II by serine phosphorylation of the repetitive C-terminal domain (CTD) of its large subunit (POLR2A), allowing its escape from the promoter and elongation of the transcripts. Involved in cell cycle control and in RNA transcription by RNA polymerase II. This is CDK-activating kinase assembly factor MAT1 (Mnat1) from Mus musculus (Mouse).